A 340-amino-acid chain; its full sequence is 4-hydroxy-2-oxovalerate aldolase (340 aa).

The Pyruvate carboxyltransferase domain maps to 4-255; sequence VVIHDPTLRD…ATGIDLYALL (252 aa). 12 to 13 provides a ligand contact to substrate; the sequence is RD. D13 contacts Mn(2+). H16 functions as the Proton acceptor in the catalytic mechanism. S166 and H194 together coordinate substrate. The Mn(2+) site is built by H194 and H196.

This sequence belongs to the 4-hydroxy-2-oxovalerate aldolase family.

It carries out the reaction (S)-4-hydroxy-2-oxopentanoate = acetaldehyde + pyruvate. This chain is 4-hydroxy-2-oxovalerate aldolase, found in Streptomyces griseus subsp. griseus (strain JCM 4626 / CBS 651.72 / NBRC 13350 / KCC S-0626 / ISP 5235).